A 640-amino-acid chain; its full sequence is Phosphomethylpyrimidine synthase (640 aa).

Residues N235, M264, Y293, H329, 349–351 (SRG), 390–393 (DGLR), and E429 contribute to the substrate site. H433 is a binding site for Zn(2+). Y456 provides a ligand contact to substrate. A Zn(2+)-binding site is contributed by H497. [4Fe-4S] cluster is bound by residues C577, C580, and C585.

This sequence belongs to the ThiC family. In terms of assembly, homodimer. [4Fe-4S] cluster serves as cofactor.

It carries out the reaction 5-amino-1-(5-phospho-beta-D-ribosyl)imidazole + S-adenosyl-L-methionine = 4-amino-2-methyl-5-(phosphooxymethyl)pyrimidine + CO + 5'-deoxyadenosine + formate + L-methionine + 3 H(+). It participates in cofactor biosynthesis; thiamine diphosphate biosynthesis. Catalyzes the synthesis of the hydroxymethylpyrimidine phosphate (HMP-P) moiety of thiamine from aminoimidazole ribotide (AIR) in a radical S-adenosyl-L-methionine (SAM)-dependent reaction. In Photobacterium profundum (strain SS9), this protein is Phosphomethylpyrimidine synthase.